The following is a 314-amino-acid chain: Endolytic peptidoglycan transglycosylase RlpA (314 aa).

The signal sequence occupies residues 1 to 19; sequence MGWALKKVCFLGVIFLISA. The N-palmitoyl cysteine moiety is linked to residue Cys-20. Cys-20 carries S-diacylglycerol cysteine lipidation. In terms of domain architecture, SPOR spans 241-314; it reads SVSGGKFSLQ…YNQNAVLTRE (74 aa).

This sequence belongs to the RlpA family.

It is found in the cell membrane. Lytic transglycosylase with a strong preference for naked glycan strands that lack stem peptides. This Helicobacter pylori (strain J99 / ATCC 700824) (Campylobacter pylori J99) protein is Endolytic peptidoglycan transglycosylase RlpA.